Here is a 321-residue protein sequence, read N- to C-terminus: tRNA U34 carboxymethyltransferase (321 aa).

Residues Lys-90, Trp-104, Lys-109, Gly-129, 151–153, 180–181, Met-195, Tyr-199, and Arg-314 each bind carboxy-S-adenosyl-L-methionine; these read DPT and IE.

Belongs to the class I-like SAM-binding methyltransferase superfamily. CmoB family. As to quaternary structure, homotetramer.

It catalyses the reaction carboxy-S-adenosyl-L-methionine + 5-hydroxyuridine(34) in tRNA = 5-carboxymethoxyuridine(34) in tRNA + S-adenosyl-L-homocysteine + H(+). Functionally, catalyzes carboxymethyl transfer from carboxy-S-adenosyl-L-methionine (Cx-SAM) to 5-hydroxyuridine (ho5U) to form 5-carboxymethoxyuridine (cmo5U) at position 34 in tRNAs. This chain is tRNA U34 carboxymethyltransferase, found in Haemophilus influenzae (strain 86-028NP).